The primary structure comprises 514 residues: MEISWGRAMWRNFLGQSPDWYKLALLVFLIVNPFIFLANPFVAGWLLVAEFIFTLAMALKCYPLLPGGLLAIEAVIIGMTSAAHVREEVAANLEVLLLLMFMVAGIYFMKQLLLFIFTRLLLSIRSKMVLSLAFCVAAAFLSAFLDALTVVAVVISVAVGFYGIYHRVASSRGEENDMLDDSHIDPHYKTVLEQFRGFLRSLMMHAGVGTALGGVMTMVGEPQNLIIAKAAGWHFGDFFLRMSPVTVPVLVCGLLTCMLVEKMRWFGYGETLPEKVRDVLQQFDDQSRKKRTRQDKIKLIVQAVIGVWLVTALALHLAEVGLIGLSVIILATALTGVTDEHAIGKAFTESLPFTALLTVFFSIVAVIIDQHLFAPIIQFVLQASEHAQLTLFYLFNGLLSSISDNVFVGTIYINEAKAAMENGAISLKQFELLAVAINTGTNLPSVATPNGQAAFLFLLTSALAPLIRLSYGRMVWMALPYTIVLTLIGLLCVEFALAPATEWMTQAGWLATLS.

12 helical membrane passes run 23–43 (LALLVFLIVNPFIFLANPFVA), 63–83 (PLLPGGLLAIEAVIIGMTSAA), 97–117 (LLLMFMVAGIYFMKQLLLFIF), 120–140 (LLLSIRSKMVLSLAFCVAAAF), 144–164 (FLDALTVVAVVISVAVGFYGI), 202–222 (LMMHAGVGTALGGVMTMVGEP), 238–258 (FFLRMSPVTVPVLVCGLLTCM), 303–323 (AVIGVWLVTALALHLAEVGLI), 357–377 (LTVFFSIVAVIIDQHLFAPII), 391–411 (LFYLFNGLLSSISDNVFVGTI), 447–467 (ATPNGQAAFLFLLTSALAPLI), and 475–495 (VWMALPYTIVLTLIGLLCVEF).

This sequence belongs to the NhaB Na(+)/H(+) (TC 2.A.34) antiporter family.

The protein localises to the cell inner membrane. It carries out the reaction 2 Na(+)(in) + 3 H(+)(out) = 2 Na(+)(out) + 3 H(+)(in). Its function is as follows. Na(+)/H(+) antiporter that extrudes sodium in exchange for external protons. In Salmonella paratyphi A (strain ATCC 9150 / SARB42), this protein is Na(+)/H(+) antiporter NhaB.